Here is a 408-residue protein sequence, read N- to C-terminus: Multidrug resistance protein MdtG (408 aa).

The next 10 helical transmembrane spans lie at 13–33, 51–71, 89–109, 112–132, 138–158, 170–190, 221–241, 253–273, 287–307, and 375–395; these read LYIA…VMPF, LWSG…SPFW, LGMA…QFLL, AALG…AIQV, GWAL…GPLL, PVFF…FFFI, LFVT…ILTL, LAFI…LSAP, ILVA…FVQS, and AVFL…WLSL.

Belongs to the major facilitator superfamily. DHA1 family. MdtG (TC 2.A.1.2.20) subfamily.

Its subcellular location is the cell inner membrane. This Dickeya zeae (strain Ech586) (Dickeya dadantii (strain Ech586)) protein is Multidrug resistance protein MdtG.